The chain runs to 330 residues: MKTAYIAKQRQISFVKSHFSRQLEERLGLIEVQAPILSRVGDGTQDNLSGCEKAVQVKVKALPDAQFEVVHSLAKWKRQTLGQHDFSAGEGLYTHMKALRPDEDRLSPLHSVYVDQWDWERVMGDGERQFSTLKSTVEAIWAGIKATEAEVHKQFGLAPFLPEQIQFVHSQELLARFPDLDAKGRERAIAKELGAVFLVGIGGKLSDGHRHDVRAPDYDDWSSASELGYAGLNGDILVWNPVLEDAFELSSMGIRVDADTLMRQLALTGDEDRLQLEWHQALLRGEMPQTIGGGIGQSRLTMLLLQLPHIGQVQCGVWPAQVRESIPAIL.

It belongs to the class-II aminoacyl-tRNA synthetase family. AsnA subfamily. Homodimer.

It localises to the cytoplasm. The enzyme catalyses L-aspartate + NH4(+) + ATP = L-asparagine + AMP + diphosphate + H(+). The protein operates within amino-acid biosynthesis; L-asparagine biosynthesis; L-asparagine from L-aspartate (ammonia route): step 1/1. In Salmonella typhimurium (strain LT2 / SGSC1412 / ATCC 700720), this protein is Aspartate--ammonia ligase.